The primary structure comprises 146 residues: Large ribosomal subunit protein uL15 (146 aa).

Residues 1–13 (MKLHELKPAEGSR) show a composition bias toward basic and acidic residues. The segment at 1–60 (MKLHELKPAEGSRKQRNRVGRGIGSGNGKTAGKGHKGQNARSGGGVRPGFEGGQNPLFRR) is disordered. Gly residues-rich tracts occupy residues 21–31 (RGIGSGNGKTA) and 42–52 (SGGGVRPGFEG).

The protein belongs to the universal ribosomal protein uL15 family. In terms of assembly, part of the 50S ribosomal subunit.

Binds to the 23S rRNA. The polypeptide is Large ribosomal subunit protein uL15 (Lysinibacillus sphaericus (strain C3-41)).